The primary structure comprises 453 residues: Pup--protein ligase (453 aa).

Glu9 contacts Mg(2+). Residue Arg53 coordinates ATP. Tyr55 is a Mg(2+) binding site. The active-site Proton acceptor is the Asp57. Glu63 contacts Mg(2+). ATP contacts are provided by Thr66 and Trp420.

The protein belongs to the Pup ligase/Pup deamidase family. Pup-conjugating enzyme subfamily.

The enzyme catalyses ATP + [prokaryotic ubiquitin-like protein]-L-glutamate + [protein]-L-lysine = ADP + phosphate + N(6)-([prokaryotic ubiquitin-like protein]-gamma-L-glutamyl)-[protein]-L-lysine.. Its pathway is protein degradation; proteasomal Pup-dependent pathway. It functions in the pathway protein modification; protein pupylation. Catalyzes the covalent attachment of the prokaryotic ubiquitin-like protein modifier Pup to the proteasomal substrate proteins, thereby targeting them for proteasomal degradation. This tagging system is termed pupylation. The ligation reaction involves the side-chain carboxylate of the C-terminal glutamate of Pup and the side-chain amino group of a substrate lysine. The sequence is that of Pup--protein ligase from Nocardioides sp. (strain ATCC BAA-499 / JS614).